The following is a 123-amino-acid chain: Large ribosomal subunit protein uL24 (123 aa).

It belongs to the universal ribosomal protein uL24 family. In terms of assembly, part of the 50S ribosomal subunit.

In terms of biological role, one of two assembly initiator proteins, it binds directly to the 5'-end of the 23S rRNA, where it nucleates assembly of the 50S subunit. Functionally, located at the polypeptide exit tunnel on the outside of the subunit. The sequence is that of Large ribosomal subunit protein uL24 from Pyrobaculum aerophilum (strain ATCC 51768 / DSM 7523 / JCM 9630 / CIP 104966 / NBRC 100827 / IM2).